The primary structure comprises 1435 residues: DNA polymerase III PolC-type (1435 aa).

The 159-residue stretch at 404–562 folds into the Exonuclease domain; the sequence is YVVYDIETTG…YDSSVLTNIF (159 aa).

The protein belongs to the DNA polymerase type-C family. PolC subfamily.

The protein localises to the cytoplasm. The catalysed reaction is DNA(n) + a 2'-deoxyribonucleoside 5'-triphosphate = DNA(n+1) + diphosphate. Functionally, required for replicative DNA synthesis. This DNA polymerase also exhibits 3' to 5' exonuclease activity. In Mycoplasmopsis pulmonis (strain UAB CTIP) (Mycoplasma pulmonis), this protein is DNA polymerase III PolC-type.